Consider the following 356-residue polypeptide: Histidinol-phosphate aminotransferase (356 aa).

Lysine 213 bears the N6-(pyridoxal phosphate)lysine mark.

It belongs to the class-II pyridoxal-phosphate-dependent aminotransferase family. Histidinol-phosphate aminotransferase subfamily. In terms of assembly, homodimer. It depends on pyridoxal 5'-phosphate as a cofactor.

The enzyme catalyses L-histidinol phosphate + 2-oxoglutarate = 3-(imidazol-4-yl)-2-oxopropyl phosphate + L-glutamate. It participates in amino-acid biosynthesis; L-histidine biosynthesis; L-histidine from 5-phospho-alpha-D-ribose 1-diphosphate: step 7/9. This is Histidinol-phosphate aminotransferase from Clostridium novyi (strain NT).